Consider the following 271-residue polypeptide: 60 kDa heat shock protein, mitochondrial (271 aa).

Ser30 and Ser33 each carry phosphoserine. Residue 50–54 (DGTTT) coordinates ATP. Lys83 carries the post-translational modification N6-acetyllysine. 3 positions are modified to N6-acetyllysine; alternate: Lys84, Lys97, and Lys112. An N6-succinyllysine; alternate mark is found at Lys84, Lys97, and Lys112. Lys125 is subject to N6-acetyllysine. Lys126 carries the N6-acetyllysine; alternate modification. Lys126 bears the N6-succinyllysine; alternate mark. Lys145 is modified (N6-acetyllysine). Lys175 carries the N6-succinyllysine modification. Lys188 and Lys237 each carry N6-acetyllysine. Residue Gly257 coordinates ATP. At Lys270 the chain carries N6-acetyllysine.

The protein belongs to the chaperonin (HSP60) family. As to quaternary structure, homoheptamer arranged in a ring structure. The functional units of these chaperonins consist of heptameric rings of the large subunit Hsp60, which function as a back-to-back double ring. Interacts with 2 heptameric Hsp10 rings to form the symmetrical football complex. Interacts with HRAS. Interacts with ATAD3A. Interacts with ETFBKMT and EEF1AKMT3. Interacts with MFHAS1. In terms of tissue distribution, detected at higher levels in caput epididymal spermatazoa than in cauda epididymal spermatazoa (at protein level).

It localises to the mitochondrion matrix. It catalyses the reaction ATP + H2O + a folded polypeptide = ADP + phosphate + an unfolded polypeptide.. Functionally, chaperonin implicated in mitochondrial protein import and macromolecular assembly. Together with Hsp10, facilitates the correct folding of imported proteins. May also prevent misfolding and promote the refolding and proper assembly of unfolded polypeptides generated under stress conditions in the mitochondrial matrix. The functional units of these chaperonins consist of heptameric rings of the large subunit Hsp60, which function as a back-to-back double ring. In a cyclic reaction, Hsp60 ring complexes bind one unfolded substrate protein per ring, followed by the binding of ATP and association with 2 heptameric rings of the co-chaperonin Hsp10. This leads to sequestration of the substrate protein in the inner cavity of Hsp60 where, for a certain period of time, it can fold undisturbed by other cell components. Synchronous hydrolysis of ATP in all Hsp60 subunits results in the dissociation of the chaperonin rings and the release of ADP and the folded substrate protein. The protein is 60 kDa heat shock protein, mitochondrial of Mesocricetus auratus (Golden hamster).